The chain runs to 146 residues: Snaclec alboaggregin-B subunit beta (146 aa).

An N-terminal signal peptide occupies residues 1-23 (MGRFIFGSFGLLVLFLSLSGTGA). The 120-residue stretch at 24 to 143 (DCPSDWSSYD…CSRTYPFVCK (120 aa)) folds into the C-type lectin domain. Disulfide bonds link cysteine 25–cysteine 36, cysteine 53–cysteine 142, and cysteine 119–cysteine 134.

It belongs to the snaclec family. Heterodimer of subunits alpha and beta; disulfide-linked. In terms of tissue distribution, expressed by the venom gland.

It is found in the secreted. Functionally, weakly agglutinates platelets at high doses by binding to GPIbalpha (GP1BA). In Trimeresurus albolabris (White-lipped pit viper), this protein is Snaclec alboaggregin-B subunit beta.